The primary structure comprises 502 residues: Glycerol kinase (502 aa).

T14 provides a ligand contact to ADP. Residues T14, T15, and S16 each contribute to the ATP site. T14 lines the sn-glycerol 3-phosphate pocket. R18 serves as a coordination point for ADP. R84, E85, Y136, and D246 together coordinate sn-glycerol 3-phosphate. R84, E85, Y136, D246, and Q247 together coordinate glycerol. ADP is bound by residues T268 and G311. Residues T268, G311, Q315, and G412 each coordinate ATP. ADP-binding residues include G412 and N416.

This sequence belongs to the FGGY kinase family.

It catalyses the reaction glycerol + ATP = sn-glycerol 3-phosphate + ADP + H(+). It functions in the pathway polyol metabolism; glycerol degradation via glycerol kinase pathway; sn-glycerol 3-phosphate from glycerol: step 1/1. Its activity is regulated as follows. Inhibited by fructose 1,6-bisphosphate (FBP). In terms of biological role, key enzyme in the regulation of glycerol uptake and metabolism. Catalyzes the phosphorylation of glycerol to yield sn-glycerol 3-phosphate. The polypeptide is Glycerol kinase (Pasteurella multocida (strain Pm70)).